The following is a 339-amino-acid chain: Bifunctional NMN adenylyltransferase/Nudix hydrolase (339 aa).

Residues 1–183 (MQTKYQYGIY…RYIALCDEYQ (183 aa)) form an NMN adenylyltransferase region. The Nudix hydrolase domain maps to 199 to 335 (PTFITTDAVV…EDHFQIIQHF (137 aa)). The short motif at 233 to 254 (GFIKQNETLVEGMLRELKEETR) is the Nudix box element.

The protein in the N-terminal section; belongs to the archaeal NMN adenylyltransferase family. Requires Mg(2+) as cofactor. The cofactor is Mn(2+).

The protein resides in the cytoplasm. The catalysed reaction is beta-nicotinamide D-ribonucleotide + ATP + H(+) = diphosphate + NAD(+). The protein operates within cofactor biosynthesis; NAD(+) biosynthesis; NAD(+) from nicotinamide D-ribonucleotide: step 1/1. The Nudix hydrolase domain is active on ADP-ribose, (2')-phospho-ADP-ribose, IDP-ribose and NADPH. The protein is Bifunctional NMN adenylyltransferase/Nudix hydrolase of Synechocystis sp. (strain ATCC 27184 / PCC 6803 / Kazusa).